The sequence spans 140 residues: Cytochrome b (140 aa).

A helical membrane pass occupies residues 38 to 58 (FFALHFLLPFVLAALVIMHLI). 2 residues coordinate heme b: H42 and H56. Residue H61 coordinates a ubiquinone. A helical membrane pass occupies residues 85 to 105 (FVFKDLVTIFIFFIVLSIFVF).

This sequence belongs to the cytochrome b family. In terms of assembly, fungal cytochrome b-c1 complex contains 10 subunits; 3 respiratory subunits, 2 core proteins and 5 low-molecular weight proteins. Cytochrome b-c1 complex is a homodimer. Heme b serves as cofactor.

It is found in the mitochondrion inner membrane. In terms of biological role, component of the ubiquinol-cytochrome c reductase complex (complex III or cytochrome b-c1 complex) that is part of the mitochondrial respiratory chain. The b-c1 complex mediates electron transfer from ubiquinol to cytochrome c. Contributes to the generation of a proton gradient across the mitochondrial membrane that is then used for ATP synthesis. The chain is Cytochrome b (cob) from Aspergillus terreus.